A 601-amino-acid polypeptide reads, in one-letter code: Potassium-transporting ATPase potassium-binding subunit (601 aa).

12 helical membrane passes run 6–26, 65–85, 136–156, 179–199, 283–303, 313–333, 367–387, 397–417, 419–439, 458–478, 524–544, and 566–586; these read IMLL…LGLF, SYAI…YAVQ, ALTG…FALI, LYIL…QGVI, FSNF…CFTF, GWAV…IVMT, FGIS…CGAV, MGGF…GGVG, GLYG…LMIG, SIAI…AVLV, MLAI…LAIA, and LFVA…YVPA.

Belongs to the KdpA family. As to quaternary structure, the system is composed of three essential subunits: KdpA, KdpB and KdpC.

It localises to the cell inner membrane. In terms of biological role, part of the high-affinity ATP-driven potassium transport (or Kdp) system, which catalyzes the hydrolysis of ATP coupled with the electrogenic transport of potassium into the cytoplasm. This subunit binds the periplasmic potassium ions and delivers the ions to the membrane domain of KdpB through an intramembrane tunnel. The protein is Potassium-transporting ATPase potassium-binding subunit of Herminiimonas arsenicoxydans.